The following is a 1012-amino-acid chain: DNA polymerase catalytic subunit (1012 aa).

The protein belongs to the DNA polymerase type-B family.

It is found in the host nucleus. It catalyses the reaction DNA(n) + a 2'-deoxyribonucleoside 5'-triphosphate = DNA(n+1) + diphosphate. Its function is as follows. Replicates viral genomic DNA. This is DNA polymerase catalytic subunit (U38) from Human herpesvirus 6B (strain Z29) (HHV-6 variant B).